The sequence spans 533 residues: Glucose-6-phosphate isomerase (533 aa).

E322 functions as the Proton donor in the catalytic mechanism. Active-site residues include H351 and K455.

It belongs to the GPI family.

The protein localises to the cytoplasm. It catalyses the reaction alpha-D-glucose 6-phosphate = beta-D-fructose 6-phosphate. Its pathway is carbohydrate biosynthesis; gluconeogenesis. It participates in carbohydrate degradation; glycolysis; D-glyceraldehyde 3-phosphate and glycerone phosphate from D-glucose: step 2/4. Functionally, catalyzes the reversible isomerization of glucose-6-phosphate to fructose-6-phosphate. The sequence is that of Glucose-6-phosphate isomerase from Desulfitobacterium hafniense (strain Y51).